Reading from the N-terminus, the 481-residue chain is Glucokinase-1 (481 aa).

Residues 4–477 form the Hexokinase domain; sequence PKLTKAVDSI…SGVGAALCAL (474 aa). The segment at 64–204 is hexokinase small subdomain; that stretch reads SGQEHGVTML…LSNVHVVALT (141 aa). Residue lysine 101 participates in ATP binding. The tract at residues 146–172 is glucose-binding; it reads KMGFTFSYPVDQTSLSSGKLIRWTKGF. The hexokinase large subdomain stretch occupies residues 205–466; it reads NDTTGTLLAR…RDVHLRISKD (262 aa). 466–471 lines the ATP pocket; the sequence is DGSGVG.

It belongs to the hexokinase family.

It catalyses the reaction D-glucose + ATP = D-glucose 6-phosphate + ADP + H(+). It carries out the reaction a D-hexose + ATP = a D-hexose 6-phosphate + ADP + H(+). The enzyme catalyses D-mannose + ATP = D-mannose 6-phosphate + ADP + H(+). Its pathway is carbohydrate metabolism; hexose metabolism. It participates in carbohydrate degradation; glycolysis; D-glyceraldehyde 3-phosphate and glycerone phosphate from D-glucose: step 1/4. In terms of biological role, glukokinase specific for aldohexoses. Phosphorylates glucose and mannose, but not fructose. The polypeptide is Glucokinase-1 (GLK1) (Kluyveromyces lactis (strain ATCC 8585 / CBS 2359 / DSM 70799 / NBRC 1267 / NRRL Y-1140 / WM37) (Yeast)).